The following is a 394-amino-acid chain: Chaperone protein DnaJ (394 aa).

Residues D6–G71 form the J domain. The segment at G152–E234 adopts a CR-type zinc-finger fold. 8 residues coordinate Zn(2+): C165, C168, C182, C185, C208, C211, C222, and C225. CXXCXGXG motif repeat units lie at residues C165 to G172, C182 to G189, C208 to G215, and C222 to G229.

This sequence belongs to the DnaJ family. In terms of assembly, homodimer. The cofactor is Zn(2+).

Its subcellular location is the cytoplasm. Its function is as follows. Participates actively in the response to hyperosmotic and heat shock by preventing the aggregation of stress-denatured proteins and by disaggregating proteins, also in an autonomous, DnaK-independent fashion. Unfolded proteins bind initially to DnaJ; upon interaction with the DnaJ-bound protein, DnaK hydrolyzes its bound ATP, resulting in the formation of a stable complex. GrpE releases ADP from DnaK; ATP binding to DnaK triggers the release of the substrate protein, thus completing the reaction cycle. Several rounds of ATP-dependent interactions between DnaJ, DnaK and GrpE are required for fully efficient folding. Also involved, together with DnaK and GrpE, in the DNA replication of plasmids through activation of initiation proteins. The sequence is that of Chaperone protein DnaJ from Bacteroides fragilis (strain YCH46).